An 855-amino-acid chain; its full sequence is MNESFDKDFSNHTPMMQQYLKLKAQHPEILLFYRMGDFYELFYDDAKRASQLLDISLTKRGASAGEPIPMAGIPHHAVENYLAKLVNQGESVAICEQIGDPATSKGPVERKVVRIVTPGTISDEALLQERQDNLLAAIWQDGKGYGYATLDISSGRFRLSEPADRETMAAELQRTNPAELLYAEDFAEMALIEGRRGLRRRPLWEFEIDTARQQLNLQFGTRDLVGFGVENASRGLCAAGCLLQYVKDTQRTSLPHIRSITMERQQDSIIMDAATRRNLEITQNLAGGVENTLAAVLDCTVTPMGSRMLKRWLHMPVRNTDILRERQQTIGALQDTVSELQPVLRQVGDLERILARLALRTARPRDLARMRHAFQQLPELHAQLETVDSAPVQALRKKMGDFAEPRDLLERAIIDAPPVLVRDGGVIAPGYHEELDEWRALADGATDYLDRLEIRERERTGLDTLKVGYNAVHGYYIQISRGQSHLAPINYVRRQTLKNAERYIIPELKEYEDKVLTSKGKALALEKQLYDELFDLLLPHLADLQQSANALAELDVLVNLAERAWTLNYTCPTFTDKPGIRITEGRHPVVEQVLNEPFIANPLNLSPQRRMLIITGPNMGGKSTYMRQTALIALLAYIGSYVPAQNVEIGPIDRIFTRVGAADDLASGRSTFMVEMTETANILHNATENSLVLMDEIGRGTSTYDGLSLAWACAENLANKIKALTLFATHYFELTQLPEKMEGVANVHLDALEHGDTIAFMHSVQDGAASKSYGLAVAALAGVPKEVIKRARQKLRELESISPNAAATQVDGTQMSLLAAPEETSPAVEALENLDPDSLTPRQALEWIYRLKSLV.

Position 616-623 (616-623 (GPNMGGKS)) interacts with ATP.

The protein belongs to the DNA mismatch repair MutS family.

This protein is involved in the repair of mismatches in DNA. It is possible that it carries out the mismatch recognition step. This protein has a weak ATPase activity. This Salmonella paratyphi C (strain RKS4594) protein is DNA mismatch repair protein MutS.